Reading from the N-terminus, the 755-residue chain is DNA ligase 1 (755 aa).

The transit peptide at 1-44 directs the protein to the mitochondrion; sequence MRRLLTGCLLSSARPLKSRLPLLMSSSLPSSAGKKPKQATLARF. Arg2 carries the N-acetylserine modification. Positions 47 to 60 are enriched in polar residues; it reads SMKNKPTEGTPSPK. Disordered regions lie at residues 47–79 and 97–127; these read SMKN…GEEE and PSSM…QRLV. A phosphoserine mark is found at Ser58 and Ser75. A compositionally biased stretch (low complexity) spans 102-114; the sequence is SNFSSIPSSAPSS. A phosphoserine mark is found at Ser119 and Ser123. Residues 309–318 are interaction with target DNA; the sequence is KLRIGLAEKT. ATP is bound at residue Glu417. Lys419 (N6-AMP-lysine intermediate) is an active-site residue. Positions 424 and 440 each coordinate ATP. A Mg(2+)-binding site is contributed by Glu472. The interval 493–495 is interaction with target DNA; the sequence is KRK. Glu571 serves as a coordination point for Mg(2+). ATP-binding residues include Lys576, Arg590, and Lys596.

Belongs to the ATP-dependent DNA ligase family. Requires Mg(2+) as cofactor.

The protein localises to the mitochondrion. It localises to the nucleus. It catalyses the reaction ATP + (deoxyribonucleotide)n-3'-hydroxyl + 5'-phospho-(deoxyribonucleotide)m = (deoxyribonucleotide)n+m + AMP + diphosphate.. DNA ligase that seals nicks in double-stranded DNA during DNA replication, DNA recombination and DNA repair. The mitochondrial form is required for mitochondrial DNA maintenance but is non-essential while the nuclear form is essential for cell viability. The protein is DNA ligase 1 (CDC9) of Saccharomyces cerevisiae (strain ATCC 204508 / S288c) (Baker's yeast).